We begin with the raw amino-acid sequence, 250 residues long: AA9 family lytic polysaccharide monooxygenase F (250 aa).

An N-terminal signal peptide occupies residues 1 to 21 (MAMSKIATLAGLLASAGLVAG). His-22 contributes to the Cu(2+) binding site. Residue Asp-51 participates in O2 binding. Intrachain disulfides connect Cys-77/Cys-200 and Cys-121/Cys-125. His-107 lines the Cu(2+) pocket. 2 residues coordinate O2: His-186 and Gln-195. Residue Tyr-197 coordinates Cu(2+).

This sequence belongs to the glycosyl hydrolase 61 family. Cu(2+) is required as a cofactor.

It localises to the secreted. It carries out the reaction Endohydrolysis of (1-&gt;4)-beta-D-glucosidic linkages in cellulose, lichenin and cereal beta-D-glucans.. Lytic polysaccharide monooxygenase (LMPO) that depolymerizes crystalline and amorphous polysaccharides via the oxidation of scissile alpha- or beta-(1-4)-glycosidic bonds, yielding C1 or C4 oxidation products. Catalysis by LPMOs requires the reduction of the active-site copper from Cu(II) to Cu(I) by a reducing agent and H(2)O(2) or O(2) as a cosubstrate. Major secreted component of the extracellular cellulolytic system. The chain is AA9 family lytic polysaccharide monooxygenase F from Emericella nidulans (strain FGSC A4 / ATCC 38163 / CBS 112.46 / NRRL 194 / M139) (Aspergillus nidulans).